Consider the following 1165-residue polypeptide: Transient receptor potential cation channel subfamily M member 5 (1165 aa).

At 1–715 (MVEKSSERFD…LRRWNRFWSA (715 aa)) the chain is on the cytoplasmic side. Position 121 is a phosphoserine (serine 121). Residues glutamate 212, cysteine 324, aspartate 333, aspartate 336, and glutamate 337 each contribute to the Ca(2+) site. The helical transmembrane segment at 716–740 (PVTVFMGNVIMYFAFLILFSYVLLL) threads the bilayer. Topologically, residues 741–751 (DFRPPPPYGPS) are extracellular. A helical transmembrane segment spans residues 752-771 (AAEIILYFWVFTLVLEEIRQ). The Ca(2+) site is built by glutamate 768 and glutamine 771. Topologically, residues 772 to 792 (SFFTDEDMSILKKMKLYVEDN) are cytoplasmic. A helical membrane pass occupies residues 793–811 (WNKCDMVAISLFVVGLSCR). The Ca(2+) site is built by asparagine 794 and aspartate 797. The Extracellular portion of the chain corresponds to 812–818 (MAMSTYE). The helical transmembrane segment at 819 to 841 (AGRTVLALDFMVFTLRLIHIFAI) threads the bilayer. Over 842–850 (HKQLGPKII) the chain is Cytoplasmic. The helical transmembrane segment at 851–880 (IVERMIKDVFFFLFFLSVWLIAYGVTTQAL) threads the bilayer. The Extracellular portion of the chain corresponds to 881–889 (LHPNDPRID). The segment at residues 890 to 930 (WVFRRALYRPYLHIFGQIPLEEIDAAKMPDDNCTTDVQEII) is an intramembrane region (pore-forming). Residues 904–906 (FGQ) carry the Selectivity filter motif. Over 931 to 942 (LGTLPPCPNIYA) the chain is Extracellular. The chain crosses the membrane as a helical span at residues 943 to 977 (NWLVILLLVIYLLVTNVLLLNLLIAMFSYTFQVVQ). The Cytoplasmic portion of the chain corresponds to 978 to 1165 (ENADIFWKFQ…TDKKLPFIDH (188 aa)). Glutamate 994 is a binding site for Ca(2+). A disordered region spans residues 1122–1165 (RDAPKAPRSIAGSSRDQQPQGAKRQQPAGHPAYGTDKKLPFIDH). Residues 1132–1141 (AGSSRDQQPQ) show a composition bias toward polar residues. The segment covering 1156–1165 (TDKKLPFIDH) has biased composition (basic and acidic residues).

This sequence belongs to the transient receptor (TC 1.A.4) family. LTrpC subfamily. TRPM5 sub-subfamily. As to quaternary structure, homotetramer.

The protein resides in the cell membrane. The catalysed reaction is Na(+)(in) = Na(+)(out). It catalyses the reaction K(+)(in) = K(+)(out). Ca(2+)-activated cation channel. Displays voltage dependence modulation. Regulated by PI(4,5)P2 levels. PI(4,5)P 2 reverses the Ca(2+) -induced desensitization of channels. Is highly temperature-sensitive. Its function is as follows. Monovalent cation-selective ion channel activated by intracellular Ca(2+) in a voltage- and temperature-dependent manner. Mediates the transport of Na(+), K(+) and Cs(+) ions equally well. Activated directly by increase in intracellular Ca(2+), but is impermeable to it. The activation mechanism of TRPM5 involves a multistep process. TRPM5 activation involves ligand binding (i.e., tastant molecule, glucose stimulation) to Gq/G-protein coupled receptors (GPCR) and leads to the breakdown of phosphatidylinositol bisphosphate (PIP2) into diacylglycerol (DAG) and inositol trisphosphate (IP3), IP3 binds to its receptors in the endoplasmic reticulum and cause Ca(2+) release. Simultaneously with the intracellular Ca(2+) release, DAG activates the protein kinase C (PKC), which phosphorylates the TRPM5 channel. This phosphorylation combined with the bound Ca(2+), leads to a robust inward current allowing the entry of sodium ions (Na+) into the cell. This ion influx depolarizes the cell membrane, generating action potentials that propagate TRPM5 signals. The sequence is that of Transient receptor potential cation channel subfamily M member 5 from Danio rerio (Zebrafish).